The following is an 88-amino-acid chain: Kunitz-type kappaPI-theraphotoxin-Hs1b (88 aa).

A signal peptide spans 1–27 (MGIARILSAVLFLSVLFVVTFPALLSA). The propeptide occupies 28-33 (DHHDGR). The BPTI/Kunitz inhibitor domain occupies 37-85 (CRLPSDRGRCKASFERWYFNGRTCAKFIYGGCGGNGNKFPTQEACMKRC). 3 cysteine pairs are disulfide-bonded: cysteine 37–cysteine 85, cysteine 46–cysteine 68, and cysteine 60–cysteine 81.

Belongs to the venom Kunitz-type family. 02 (native) subfamily. In terms of tissue distribution, expressed by the venom gland.

It localises to the secreted. Serine protease inhibitor that inhibits trypsin at a molar ratio of 1:1. This Cyriopagopus schmidti (Chinese bird spider) protein is Kunitz-type kappaPI-theraphotoxin-Hs1b.